A 397-amino-acid chain; its full sequence is Phosphoglycerate kinase (397 aa).

Substrate is bound by residues 25–27 (DLN), Arg41, 64–67 (HLGR), Arg118, and Arg151. ATP contacts are provided by residues Lys202, Glu324, and 350 to 353 (GGDT).

This sequence belongs to the phosphoglycerate kinase family. Monomer.

Its subcellular location is the cytoplasm. It carries out the reaction (2R)-3-phosphoglycerate + ATP = (2R)-3-phospho-glyceroyl phosphate + ADP. The protein operates within carbohydrate degradation; glycolysis; pyruvate from D-glyceraldehyde 3-phosphate: step 2/5. The protein is Phosphoglycerate kinase of Acidovorax sp. (strain JS42).